A 135-amino-acid chain; its full sequence is Large ribosomal subunit protein bL19 (135 aa).

It belongs to the bacterial ribosomal protein bL19 family.

Its function is as follows. This protein is located at the 30S-50S ribosomal subunit interface and may play a role in the structure and function of the aminoacyl-tRNA binding site. The sequence is that of Large ribosomal subunit protein bL19 from Xanthomonas axonopodis pv. citri (strain 306).